The following is a 511-amino-acid chain: Ribonuclease Y (511 aa).

The chain crosses the membrane as a helical span at residues 3–23; the sequence is VTIVASIACFIVGGILSYVLF. One can recognise a KH domain in the interval 201–261; it reads SVTVFHIESD…VRREIARLAL (61 aa). The 94-residue stretch at 327-420 folds into the HD domain; it reads LLQHARETAN…VQVCDAISGA (94 aa).

This sequence belongs to the RNase Y family.

Its subcellular location is the cell membrane. Functionally, endoribonuclease that initiates mRNA decay. The polypeptide is Ribonuclease Y (Bacteroides fragilis (strain ATCC 25285 / DSM 2151 / CCUG 4856 / JCM 11019 / LMG 10263 / NCTC 9343 / Onslow / VPI 2553 / EN-2)).